We begin with the raw amino-acid sequence, 148 residues long: Putative HTH-type transcriptional regulator NMA1593 (148 aa).

The HTH rrf2-type domain maps to 2–131 (RLTTKGRFAV…GSVTLQSIIE (130 aa)).

In Neisseria meningitidis serogroup A / serotype 4A (strain DSM 15465 / Z2491), this protein is Putative HTH-type transcriptional regulator NMA1593.